An 880-amino-acid chain; its full sequence is Calcium-transporting ATPase lmo0841 (880 aa).

4 helical membrane passes run 47 to 67 (LWKL…VIAA), 68 to 88 (LVQL…VLIV), 243 to 263 (LGLG…GRVL), and 271 to 291 (MATA…AAIP). Valine 287, alanine 288, isoleucine 290, and glutamate 292 together coordinate Ca(2+). Aspartate 334 serves as the catalytic 4-aspartylphosphate intermediate. A run of 5 helical transmembrane segments spans residues 681–701 (IAYL…ALVL), 707–727 (FTAL…AIAL), 756–776 (AVIS…YIGM), 819–839 (YVIG…LPGA), and 854–874 (WSIA…IKVV). 2 residues coordinate Ca(2+): asparagine 716 and aspartate 720.

Belongs to the cation transport ATPase (P-type) (TC 3.A.3) family. Type IIA subfamily.

It is found in the cell membrane. It carries out the reaction Ca(2+)(in) + ATP + H2O = Ca(2+)(out) + ADP + phosphate + H(+). With respect to regulation, phosphorylation is inhibited by EGTA and vanadate. ATPase activity is stimulated by Sr(2+). Inhibited by very high concentrations of cyclopiazonic acid (CPA). Catalyzes the hydrolysis of ATP coupled with the transport of calcium. The transport is electrogenic with a probable ATP:Ca(2+):H(+) stoichiometry of 1:1:1. May have an important role in survival of the bacterium when stressed by a combination of a high calcium concentration and alkaline pH. In Listeria monocytogenes serovar 1/2a (strain ATCC BAA-679 / EGD-e), this protein is Calcium-transporting ATPase lmo0841.